A 196-amino-acid polypeptide reads, in one-letter code: Protein GrpE (196 aa).

The tract at residues 1–41 (MSSKEQKTPEGQAPEEIITEQHDDVEAVEPEVSAEQVDPRD) is disordered.

The protein belongs to the GrpE family. As to quaternary structure, homodimer.

The protein localises to the cytoplasm. Its function is as follows. Participates actively in the response to hyperosmotic and heat shock by preventing the aggregation of stress-denatured proteins, in association with DnaK and GrpE. It is the nucleotide exchange factor for DnaK and may function as a thermosensor. Unfolded proteins bind initially to DnaJ; upon interaction with the DnaJ-bound protein, DnaK hydrolyzes its bound ATP, resulting in the formation of a stable complex. GrpE releases ADP from DnaK; ATP binding to DnaK triggers the release of the substrate protein, thus completing the reaction cycle. Several rounds of ATP-dependent interactions between DnaJ, DnaK and GrpE are required for fully efficient folding. This chain is Protein GrpE, found in Klebsiella pneumoniae subsp. pneumoniae (strain ATCC 700721 / MGH 78578).